A 1162-amino-acid chain; its full sequence is Glycerophosphocholine phosphodiesterase GDE1 (1162 aa).

The SPX domain occupies 1–155 (MKFGKTYVTH…TSILSQHSGV (155 aa)). ANK repeat units lie at residues 346–375 (YHRT…KWGL), 392–421 (EGLT…AQTL), 423–452 (CPNL…DVNY), 458–487 (RNET…NTEI), 492–521 (FGWT…SYDI), and 525–554 (SGWL…KLLL). Residues 817–1146 (TRVIGHRGLG…DSVLAVREGL (330 aa)) form the GP-PDE domain.

Belongs to the GDE1 family.

The protein localises to the cytoplasm. It carries out the reaction sn-glycerol 3-phosphocholine + H2O = sn-glycerol 3-phosphate + choline + H(+). In terms of biological role, glycerophosphocholine glycerophosphodiesterase responsible for the hydrolysis of intracellular glycerophosphocholine into glycerol-phosphate and choline. The choline is used for phosphatidyl-choline synthesis. Required for utilization of glycerophosphocholine as phosphate source. C.albicans can utilize GroPCho through transport and intracellular hydrolysis or through extracellular hydrolysis. In Candida albicans (strain SC5314 / ATCC MYA-2876) (Yeast), this protein is Glycerophosphocholine phosphodiesterase GDE1.